Reading from the N-terminus, the 66-residue chain is Large ribosomal subunit protein bL33 (66 aa).

The protein belongs to the bacterial ribosomal protein bL33 family.

The chain is Large ribosomal subunit protein bL33 from Synechococcus sp. (strain CC9311).